The following is a 339-amino-acid chain: Undecaprenyl-phosphate 4-deoxy-4-formamido-L-arabinose transferase (339 aa).

A run of 2 helical transmembrane segments spans residues 235-255 and 269-289; these read LSLV…FLLV and LFVL…GMGL.

It belongs to the glycosyltransferase 2 family.

The protein localises to the cell inner membrane. It catalyses the reaction UDP-4-deoxy-4-formamido-beta-L-arabinose + di-trans,octa-cis-undecaprenyl phosphate = 4-deoxy-4-formamido-alpha-L-arabinopyranosyl di-trans,octa-cis-undecaprenyl phosphate + UDP. It functions in the pathway glycolipid biosynthesis; 4-amino-4-deoxy-alpha-L-arabinose undecaprenyl phosphate biosynthesis; 4-amino-4-deoxy-alpha-L-arabinose undecaprenyl phosphate from UDP-4-deoxy-4-formamido-beta-L-arabinose and undecaprenyl phosphate: step 1/2. Its pathway is bacterial outer membrane biogenesis; lipopolysaccharide biosynthesis. Catalyzes the transfer of 4-deoxy-4-formamido-L-arabinose from UDP to undecaprenyl phosphate. The modified arabinose is attached to lipid A and is required for resistance to polymyxin and cationic antimicrobial peptides. The chain is Undecaprenyl-phosphate 4-deoxy-4-formamido-L-arabinose transferase from Pseudomonas aeruginosa (strain UCBPP-PA14).